A 264-amino-acid chain; its full sequence is 3-methyl-2-oxobutanoate hydroxymethyltransferase (264 aa).

Mg(2+) is bound by residues Asp-45 and Asp-84. 3-methyl-2-oxobutanoate contacts are provided by residues 45-46 (DS), Asp-84, and Lys-112. Glu-114 lines the Mg(2+) pocket. Glu-181 (proton acceptor) is an active-site residue.

It belongs to the PanB family. Homodecamer; pentamer of dimers. The cofactor is Mg(2+).

The protein resides in the cytoplasm. It catalyses the reaction 3-methyl-2-oxobutanoate + (6R)-5,10-methylene-5,6,7,8-tetrahydrofolate + H2O = 2-dehydropantoate + (6S)-5,6,7,8-tetrahydrofolate. The protein operates within cofactor biosynthesis; (R)-pantothenate biosynthesis; (R)-pantoate from 3-methyl-2-oxobutanoate: step 1/2. Its function is as follows. Catalyzes the reversible reaction in which hydroxymethyl group from 5,10-methylenetetrahydrofolate is transferred onto alpha-ketoisovalerate to form ketopantoate. The chain is 3-methyl-2-oxobutanoate hydroxymethyltransferase from Shewanella sp. (strain ANA-3).